The primary structure comprises 969 residues: Bifunctional glutamine synthetase adenylyltransferase/adenylyl-removing enzyme (969 aa).

Positions M1–H456 are adenylyl removase. The interval E466 to K969 is adenylyl transferase.

The protein belongs to the GlnE family. It depends on Mg(2+) as a cofactor.

It carries out the reaction [glutamine synthetase]-O(4)-(5'-adenylyl)-L-tyrosine + phosphate = [glutamine synthetase]-L-tyrosine + ADP. The enzyme catalyses [glutamine synthetase]-L-tyrosine + ATP = [glutamine synthetase]-O(4)-(5'-adenylyl)-L-tyrosine + diphosphate. Involved in the regulation of glutamine synthetase GlnA, a key enzyme in the process to assimilate ammonia. When cellular nitrogen levels are high, the C-terminal adenylyl transferase (AT) inactivates GlnA by covalent transfer of an adenylyl group from ATP to specific tyrosine residue of GlnA, thus reducing its activity. Conversely, when nitrogen levels are low, the N-terminal adenylyl removase (AR) activates GlnA by removing the adenylyl group by phosphorolysis, increasing its activity. The regulatory region of GlnE binds the signal transduction protein PII (GlnB) which indicates the nitrogen status of the cell. The protein is Bifunctional glutamine synthetase adenylyltransferase/adenylyl-removing enzyme of Nitrosococcus oceani (strain ATCC 19707 / BCRC 17464 / JCM 30415 / NCIMB 11848 / C-107).